We begin with the raw amino-acid sequence, 148 residues long: Ferredoxin-thioredoxin reductase catalytic chain, chloroplastic (148 aa).

Residues 1–35 constitute a chloroplast transit peptide; it reads MKALQASTSYSFFSKSSSATLQRRTHRPQCVILSK. C87 contributes to the [4Fe-4S] cluster binding site. C89 acts as the Nucleophile in catalysis. Residues C89 and C119 are joined by a disulfide bond. The [4Fe-4S] cluster site is built by C106, C108, and C117.

Belongs to the ferredoxin thioredoxin reductase beta subunit family. In terms of assembly, heterodimer of subunit A (variable subunit) and subunit B (catalytic subunit). Heterodimeric FTR forms a complex with ferredoxin and thioredoxin. It depends on [4Fe-4S] cluster as a cofactor.

It is found in the plastid. Its subcellular location is the chloroplast. The catalysed reaction is [thioredoxin]-disulfide + 2 reduced [2Fe-2S]-[ferredoxin] + 2 H(+) = [thioredoxin]-dithiol + 2 oxidized [2Fe-2S]-[ferredoxin]. Catalytic subunit of the ferredoxin-thioredoxin reductase (FTR), which catalyzes the two-electron reduction of thioredoxins by the electrons provided by reduced ferredoxin. This is Ferredoxin-thioredoxin reductase catalytic chain, chloroplastic from Spinacia oleracea (Spinach).